The primary structure comprises 163 residues: Small heat shock protein C1 (163 aa).

A sHSP domain is found at 55–163 (TFYESSSLKS…EQDSREITIN (109 aa)).

Belongs to the small heat shock protein (HSP20) family.

The sequence is that of Small heat shock protein C1 (hspC1) from Rickettsia prowazekii (strain Madrid E).